We begin with the raw amino-acid sequence, 207 residues long: uncharacterized protein (207 aa).

S-adenosyl-L-methionine is bound by residues Gly51 and Asp72.

Belongs to the methyltransferase superfamily. YrrT family.

Could be a S-adenosyl-L-methionine-dependent methyltransferase. This is an uncharacterized protein from Staphylococcus carnosus (strain TM300).